The chain runs to 587 residues: MQRSTMLPGVELLLLFLLSTSLHAEISHLPMASNRIILDSTELLQNPLIQDAGVPAARATPLPPQKCPSLQRYRKMLKDFDDLEDLYVDVPVHIALAERQRKRFVLNLNDSTPLTIRFSAPVGRKMYYNQTGNPLRPAAVAPGPGVAVGSLVLPCALRGQYDLFVLARHSGALKVDALAEHPQHDWPLLNATHRIAIRTQNRVRKREMIVKWERSKFDFHVMHYCLVIQRLSMDTPRMIFTNFCQAVSAYTDQQPMTPSCAAGGPLEGIWGAPPQRERRLNPRQNVHIVCTGKRRQQLLRRLLPRSSYHLDLFGIHQGRQNLTLRLASSQVNFNRTQPLALKQQALMQLKIGGQHGKQVYSFKVPQTTRQLGEPFMRHLLIPCSGSEIRVKLLRQRSEVGKTEAFYSPTYIRQKGVLPGERYLMRFEPSNDDEALRAQKVMVALSSEALFRDLPELPQNTTVFNVRTRCSRATIAWNGSPDERELSYCIIVFNLPQRNRSVVDFTNYCMDFVPKRVMQYRYFEWMTCRERQQSPDNIETETILNLMPGSSYLVYVTANLSMGKPLPYQALTLHMASQCLDGSHESFY.

Residues M1–A24 form the signal peptide. N109, N129, N190, N321, N334, N459, N498, and N558 each carry an N-linked (GlcNAc...) asparagine glycan.

Binds heparin. Interacts with dally; the interaction promotes dally degradation. Interacts with dpp and gbb.

The protein localises to the secreted. Its subcellular location is the extracellular space. It is found in the extracellular matrix. Its function is as follows. Secretory protein that acts as a feedback regulator of dpp/BMP, wg and hh signaling pathways. In the developing wing, is a dosage-dependent modulator of dpp/BMP signaling involved in wing growth and crossvein patterning; low levels promote and high levels inhibit dpp/BMP signaling. In the early pupal wing, inhibits dpp/BMP signaling activity to prevent the formation of ectopic crossveins in the posterior compartment. Binds to dpp and gbb to modulate their release and activity decreasing dpp/BMP signaling in the responding cells. During wing development regulates dpp/BMP coreceptor dally availability on the cell surface. Might have a role in testis development. This is Protein NDNF from Drosophila melanogaster (Fruit fly).